We begin with the raw amino-acid sequence, 535 residues long: MENKFMGRSLTVIDDLSIDERKYLFDKTKRLKKAIQEDDQKVMDEFRINDKDFGIYEVFLEPSTRTKESFRNAAKFHQVKLSDLAAESSSFNKGESYADTFNTLAGYQNSIFIVRSKVEGVCRWLEDEAQAFYQRNNLKRKPAFINAGDGKHEHPTQELLDEFTFIEDNNWSFDKIHIALVGDLYHGRTVHSKADGLKIFKSVKVDLIAPAELAMPEYYKVRMQENGFTVREFSSIEEYLRQADVALIWYFTRPQLERMGEQVLKKQDELRRSITFRKEFIEKLPENTRFYHPLPRHRVHPTIPTFLDATPLNGWERQSINGMYVRMVLLSMIAGKIGDDYKGPEPKSCERVEDEDYIVEVPINNSKESKVETFSEGVRPIQNGIVIDHICRGDKPSVIRHHMSKIINVMGLEEGKGGEWVSTSTKDKGTFKGIIFRPGEYKFSRADLKRLSAVASSCTLNLIKDGKIQSKYRTHLPPRIYNFEDLICKNEACISHPAQSEGVPAIFYRTIDNRYACQYCGTIHTFKEIWGEKKN.

An aspartate carbamoyltransferase region spans residues 1 to 341 (MENKFMGRSL…MIAGKIGDDY (341 aa)). The tract at residues 342–370 (KGPEPKSCERVEDEDYIVEVPINNSKESK) is linker. An aspartate carbamoyltransferase regulatory region region spans residues 371–535 (VETFSEGVRP…FKEIWGEKKN (165 aa)). Residues Cys-488, Cys-493, Cys-517, and Cys-520 each contribute to the Zn(2+) site.

In the N-terminal section; belongs to the aspartate/ornithine carbamoyltransferase superfamily. ATCase family. This sequence in the C-terminal section; belongs to the PyrI family.

It carries out the reaction carbamoyl phosphate + L-aspartate = N-carbamoyl-L-aspartate + phosphate + H(+). It participates in pyrimidine metabolism; UMP biosynthesis via de novo pathway; (S)-dihydroorotate from bicarbonate: step 2/3. The sequence is that of Protein PyrBI (pyrBI) from Treponema denticola (strain ATCC 35405 / DSM 14222 / CIP 103919 / JCM 8153 / KCTC 15104).